Consider the following 341-residue polypeptide: 2-dehydro-3-deoxy-L-galactonate 5-dehydrogenase (341 aa).

Cysteine 37 provides a ligand contact to Zn(2+). Residues threonine 39 and histidine 42 each act as charge relay system in the active site. Zn(2+)-binding residues include histidine 60, glutamate 61, cysteine 90, cysteine 93, cysteine 96, and cysteine 104.

This sequence belongs to the zinc-containing alcohol dehydrogenase family. Zn(2+) serves as cofactor.

The catalysed reaction is 2-dehydro-3-deoxy-L-galactonate + NAD(+) = 3-deoxy-D-glycero-2,5-hexodiulosonate + NADH + H(+). Its function is as follows. Involved in the degradation of 3,6-anhydro-L-galactose, which is the major monomeric sugar of red macroalgae. Catalyzes the third step of the pathway, the NAD(+)-dependent oxidation of 2-dehydro-3-deoxy-L-galactonate (L-KDGal) to 3-deoxy-D-glycero-2,5-hexodiulosonate (L-DDGal). This chain is 2-dehydro-3-deoxy-L-galactonate 5-dehydrogenase, found in Pseudoalteromonas atlantica (strain T6c / ATCC BAA-1087).